We begin with the raw amino-acid sequence, 30 residues long: PRRRTRRASRPVRRRRPRRVSRRRRARRRR.

The interval 1–30 (PRRRTRRASRPVRRRRPRRVSRRRRARRRR) is disordered.

Testis.

The protein resides in the nucleus. It localises to the chromosome. Its function is as follows. Protamines substitute for histones in the chromatin of sperm during the haploid phase of spermatogenesis. They compact sperm DNA into a highly condensed, stable and inactive complex. This is Protamine-YII from Clupea harengus (Atlantic herring).